The following is a 608-amino-acid chain: Albumin (608 aa).

A signal peptide spans 1-18; the sequence is MKWVTFISLLLLFSSAYS. A propeptide spanning residues 19–24 is cleaved from the precursor; that stretch reads RGVTRR. Albumin domains are found at residues 19-210, 211-403, and 404-601; these read RGVT…DALR, EKVL…EFKP, and LVEE…KLVA. H27 contacts Cu cation. Phosphoserine is present on S29. Ca(2+) is bound by residues E30 and D37. The cysteines at positions 77 and 86 are disulfide-linked. Phosphoserine occurs at positions 82 and 89. H91 lines the Zn(2+) pocket. 6 disulfides stabilise this stretch: C99–C115, C114–C125, C148–C193, C192–C201, C224–C270, and C269–C277. At K229 the chain carries N6-succinyllysine. Residue E268 coordinates Ca(2+). 2 residues coordinate Zn(2+): H271 and D273. D273, E276, D279, and D283 together coordinate Ca(2+). 8 disulfides stabilise this stretch: C289/C303, C302/C313, C340/C385, C384/C393, C416/C462, C461/C472, C485/C501, and C500/C511. Position 443 is a phosphoserine (S443). 2 positions are modified to phosphothreonine: T444 and T446. Position 460 is an N6-succinyllysine (K460). S513 is modified (phosphoserine). Cystine bridges form between C538–C583 and C582–C591. K558 carries the post-translational modification N6-methyllysine. T570 carries the post-translational modification Phosphothreonine. K588 bears the N6-succinyllysine mark.

This sequence belongs to the ALB/AFP/VDB family. Interacts with FCGRT; this interaction regulates ALB homeostasis. Interacts with TASOR. In plasma, occurs in a covalently-linked complex with chromophore-bound alpha-1-microglobulin; this interaction does not prevent fatty acid binding to ALB. Phosphorylated by FAM20C in the extracellular medium. Plasma.

It is found in the secreted. Functionally, binds water, Ca(2+), Na(+), K(+), fatty acids, hormones, bilirubin and drugs. Its main function is the regulation of the colloidal osmotic pressure of blood. Major zinc transporter in plasma, typically binds about 80% of all plasma zinc. Major calcium and magnesium transporter in plasma, binds approximately 45% of circulating calcium and magnesium in plasma. Potentially has more than two calcium-binding sites and might additionally bind calcium in a non-specific manner. The shared binding site between zinc and calcium at residue Asp-273 suggests a crosstalk between zinc and calcium transport in the blood. The rank order of affinity is zinc &gt; calcium &gt; magnesium. Binds to the bacterial siderophore enterobactin and inhibits enterobactin-mediated iron uptake of E.coli from ferric transferrin, and may thereby limit the utilization of iron and growth of enteric bacteria such as E.coli. Does not prevent iron uptake by the bacterial siderophore aerobactin. The protein is Albumin (ALB) of Felis catus (Cat).